The primary structure comprises 212 residues: Ras-related protein Rab-2A (212 aa).

Ala2 carries the post-translational modification N-acetylalanine. The tract at residues 2 to 19 (AYAYLFKYIIIGDTGVGK) is required for interaction with PRKCI. Positions 16, 17, 18, 19, 20, 21, and 38 each coordinate GTP. Residue Ser20 participates in Mg(2+) binding. Positions 37-42 (LTMGVE) match the Switch 1 motif. Residues Thr38 and Asp61 each coordinate Mg(2+). The Switch 2 signature appears at 63 to 72 (AGQESFRSIT). Positions 64, 119, 120, 122, 150, and 151 each coordinate GTP. Residues 190-212 (QHAATNASHGGNQGGQQAGGGCC) are disordered. The span at 200-212 (GNQGGQQAGGGCC) shows a compositional bias: gly residues. 2 S-geranylgeranyl cysteine lipidation sites follow: Cys211 and Cys212.

This sequence belongs to the small GTPase superfamily. Rab family. Interacts with PRKCI. Interacts with TRIP11. Interacts (in GTP-bound form) with GARIN1B. Interacts (GTP-bound) with HOPS complex component VPS39; interaction contributes to obtaining a functional HOPS complex that promotes autophagosome-lysosome membrane fusion driven by STX17-SNAP29-VAMP8. May interact with VPS41. The cofactor is Mg(2+). In terms of processing, prenylated. Prenylation is required for association with cellular membranes.

It localises to the endoplasmic reticulum-Golgi intermediate compartment membrane. The protein resides in the melanosome. The protein localises to the endoplasmic reticulum membrane. Its subcellular location is the golgi apparatus membrane. It is found in the cytoplasmic vesicle. It localises to the secretory vesicle. The protein resides in the acrosome. The protein localises to the autophagosome membrane. It carries out the reaction GTP + H2O = GDP + phosphate + H(+). With respect to regulation, regulated by guanine nucleotide exchange factors (GEFs) which promote the exchange of bound GDP for free GTP, GTPase activating proteins (GAPs) which increase the GTP hydrolysis activity, and GDP dissociation inhibitors (GDIs) which inhibit the dissociation of the nucleotide from the GTPase. The small GTPases Rab are key regulators of intracellular membrane trafficking, from the formation of transport vesicles to their fusion with membranes. Rabs cycle between active GTP-bound and inactive GDP-bound states. In their active state, drive transport of vesicular carriers from donor organelles to acceptor organelles to regulate the membrane traffic that maintains organelle identity and morphology. RAB2A regulates autophagy by promoting autophagosome-lysosome fusion via recruitment of the HOPS endosomal tethering complex; this process involves autophagosomal RAB2A and lysosomal RAB39A recruitment of HOPS subcomplexes VPS39-VPS11 and VPS41-VPS16-VPS18-VPS33A, respectively, which assemble into a functional complex to mediate membrane tethering and SNAREs-driven membrane fusion. Required for protein transport from the endoplasmic reticulum to the Golgi complex. Regulates the compacted morphology of the Golgi. Together with RAB2B, redundantly required for efficient autophagic flux. The chain is Ras-related protein Rab-2A (Rab2a) from Rattus norvegicus (Rat).